A 197-amino-acid chain; its full sequence is Inner membrane-spanning protein YciB (197 aa).

The next 5 membrane-spanning stretches (helical) occupy residues 22–42 (IYSA…YHWF), 48–68 (PSMM…TLIF), 76–96 (WKPS…HLIG), 121–141 (AAWV…AYTF), and 144–164 (EIWV…FLIG).

It belongs to the YciB family.

It localises to the cell inner membrane. Its function is as follows. Plays a role in cell envelope biogenesis, maintenance of cell envelope integrity and membrane homeostasis. The polypeptide is Inner membrane-spanning protein YciB (Magnetococcus marinus (strain ATCC BAA-1437 / JCM 17883 / MC-1)).